Here is a 366-residue protein sequence, read N- to C-terminus: Pyrimidine monooxygenase RutA (366 aa).

FMN is bound by residues 49-50, Asn115, Glu124, 140-141, and Ser190; these read IK and RY.

It belongs to the NtaA/SnaA/DszA monooxygenase family. RutA subfamily.

It catalyses the reaction uracil + FMNH2 + NADH + O2 = (Z)-3-ureidoacrylate + FMN + NAD(+) + H2O + H(+). The catalysed reaction is thymine + FMNH2 + NADH + O2 = (Z)-2-methylureidoacrylate + FMN + NAD(+) + H2O + H(+). In terms of biological role, catalyzes the pyrimidine ring opening between N-3 and C-4 by an unusual flavin hydroperoxide-catalyzed mechanism, adding oxygen atoms in the process to yield ureidoacrylate peracid, that immediately reacts with FMN forming ureidoacrylate and FMN-N(5)-oxide. The FMN-N(5)-oxide reacts spontaneously with NADH to produce FMN. Requires the flavin reductase RutF to regenerate FMN in vivo. The sequence is that of Pyrimidine monooxygenase RutA from Serratia proteamaculans (strain 568).